Consider the following 405-residue polypeptide: Tryptophan synthase beta chain (405 aa).

At Lys-98 the chain carries N6-(pyridoxal phosphate)lysine.

This sequence belongs to the TrpB family. In terms of assembly, tetramer of two alpha and two beta chains. Requires pyridoxal 5'-phosphate as cofactor.

The enzyme catalyses (1S,2R)-1-C-(indol-3-yl)glycerol 3-phosphate + L-serine = D-glyceraldehyde 3-phosphate + L-tryptophan + H2O. It participates in amino-acid biosynthesis; L-tryptophan biosynthesis; L-tryptophan from chorismate: step 5/5. In terms of biological role, the beta subunit is responsible for the synthesis of L-tryptophan from indole and L-serine. This Afipia carboxidovorans (strain ATCC 49405 / DSM 1227 / KCTC 32145 / OM5) (Oligotropha carboxidovorans) protein is Tryptophan synthase beta chain.